The following is a 424-amino-acid chain: Spore coat protein SP60 (424 aa).

The N-terminal stretch at 1 to 23 (MKILSLLVVGALCMGGKVYGEVN) is a signal peptide. Follistatin-like domains lie at 52-74 (DCST…RQCV), 85-109 (KCDN…ALCV), 117-139 (VCRT…ECCV), 184-206 (ICRL…ECCV), 215-234 (DLKC…SKCC), and 299-322 (RCDD…LSCE). The tract at residues 330-424 (RSLDWAENEN…FQDANDEWDY (95 aa)) is disordered. 2 stretches are compositionally biased toward acidic residues: residues 335–357 (AENE…YDGD) and 365–424 (YDGD…EWDY).

The chain is Spore coat protein SP60 (cotC) from Dictyostelium discoideum (Social amoeba).